The primary structure comprises 102 residues: Phosphoribosyl-ATP pyrophosphatase (102 aa).

Belongs to the PRA-PH family.

The protein localises to the cytoplasm. The enzyme catalyses 1-(5-phospho-beta-D-ribosyl)-ATP + H2O = 1-(5-phospho-beta-D-ribosyl)-5'-AMP + diphosphate + H(+). The protein operates within amino-acid biosynthesis; L-histidine biosynthesis; L-histidine from 5-phospho-alpha-D-ribose 1-diphosphate: step 2/9. This is Phosphoribosyl-ATP pyrophosphatase from Ignicoccus hospitalis (strain KIN4/I / DSM 18386 / JCM 14125).